The sequence spans 246 residues: mRNA-decapping protein g5R (246 aa).

Residues 93 to 239 (QKFRKNWLLP…IIGPAFNFIK (147 aa)) form the Nudix hydrolase domain. The Nudix box signature appears at 128–149 (GKPKEDESDLTCAIREFEEETG). Mg(2+) is bound at residue E134. E143 serves as the catalytic Nucleophile. Mg(2+) is bound by residues E147 and D169.

This sequence belongs to the Nudix hydrolase family. DIPP subfamily. In terms of assembly, interacts with host RPL23A. Requires Mg(2+) as cofactor. It depends on Mn(2+) as a cofactor.

It localises to the host rough endoplasmic reticulum. It catalyses the reaction diphospho-myo-inositol polyphosphate + H2O = myo-inositol polyphosphate + phosphate.. Functionally, decapping enzyme required for the removal of the 5'-end m7GpppN cap tethered to viral and host mRNAs to allow their decay in cells. May therefore accelerate viral and cellular mRNA turnover to eliminate competing host mRNAs and allow stage-specific synthesis of viral proteins. Acceleration of the turnover of cellular transcripts may even promote the shutoff of host protein synthesis. In addition to the mRNA cap, g5R also efficiently hydrolyzes diphosphoinositol polyphosphates. Down-regulation of the level of PP-InsP5 (diphosphoinositol pentakisphosphate) may play a role in viral manipulation of the cellular secretory pathway, a step necessary for the formation of virions. Binds viral and cellular poly(A) mRNAs, thereby decreasing both types of mRNAs. This African swine fever virus (isolate Warthog/Namibia/Wart80/1980) (ASFV) protein is mRNA-decapping protein g5R.